A 76-amino-acid polypeptide reads, in one-letter code: Sec-independent protein translocase protein TatA (76 aa).

Residues 1 to 21 (MGGLSIWHWLIVLLIVALVFG) form a helical membrane-spanning segment. A disordered region spans residues 43-76 (MKDGDAPADAQQLPRSGTVDVNAKEATRSDSNKA). Over residues 64-76 (NAKEATRSDSNKA) the composition is skewed to basic and acidic residues.

Belongs to the TatA/E family. In terms of assembly, the Tat system comprises two distinct complexes: a TatABC complex, containing multiple copies of TatA, TatB and TatC subunits, and a separate TatA complex, containing only TatA subunits. Substrates initially bind to the TatABC complex, which probably triggers association of the separate TatA complex to form the active translocon.

Its subcellular location is the cell inner membrane. Part of the twin-arginine translocation (Tat) system that transports large folded proteins containing a characteristic twin-arginine motif in their signal peptide across membranes. TatA could form the protein-conducting channel of the Tat system. This Burkholderia multivorans (strain ATCC 17616 / 249) protein is Sec-independent protein translocase protein TatA.